Here is a 384-residue protein sequence, read N- to C-terminus: Histone acetyltransferase type B subunit 2 (384 aa).

WD repeat units lie at residues 156-196, 203-243, 247-287, 291-331, and 348-384; these read GHSA…SSIS, RHET…CIHA, AHTS…QPLH, GHSK…AEVP, and GHTS…PQPE.

It belongs to the WD repeat RBAP46/RBAP48/MSI1 family. As to quaternary structure, component of the HAT-B complex.

It is found in the cytoplasm. It localises to the nucleus. Its function is as follows. Regulatory subunit of the histone acetylase B (HAT-B) complex. The complex acetylates histone H4 which is required for telomeric silencing. The protein is Histone acetyltransferase type B subunit 2 (HAT2) of Encephalitozoon cuniculi (strain GB-M1) (Microsporidian parasite).